Consider the following 269-residue polypeptide: Histone deacetylase HDT1 (269 aa).

Residues 97–269 (PFEEEEDDED…HSKAKHSAGK (173 aa)) form a disordered region. 2 stretches are compositionally biased toward acidic residues: residues 98–115 (FEEE…DEDI) and 153–179 (KDDE…DSEE). Residues 228 to 238 (PSKQASKTPKS) show a composition bias toward polar residues. A C2H2-type zinc finger spans residues 242–265 (HHCKPCNRSFGSEGALDSHSKAKH).

This sequence belongs to the histone deacetylase HD2 family. Predominantly expressed in ovaries. Accumulates predominantly in the micropylar region of the ovule's integument.

The protein resides in the nucleus. It localises to the nucleolus. In terms of biological role, mediates the deacetylation of lysine residues on the N-terminal part of the core histones (H2A, H2B, H3 and H4). Histone deacetylation gives a tag for epigenetic repression and plays an important role in transcriptional regulation, cell cycle progression and developmental events. This Solanum chacoense (Chaco potato) protein is Histone deacetylase HDT1 (HDT1).